Reading from the N-terminus, the 256-residue chain is BI1-like protein (256 aa).

The next 7 helical transmembrane spans lie at 53-73 (VYGI…VVVL), 85-105 (PGIL…LHIY), 113-133 (LILL…SCAM), 138-158 (IVLQ…AYTF), 167-187 (FSFL…TSFI), 189-209 (MFFP…ALVF), and 228-248 (EYIL…LTIL).

The protein belongs to the BI1 family.

It is found in the membrane. The polypeptide is BI1-like protein (Arabidopsis thaliana (Mouse-ear cress)).